A 221-amino-acid chain; its full sequence is Uridylate kinase (221 aa).

Residue 7–11 participates in ATP binding; the sequence is KISGK. Gly-43 contacts UMP. Residues Gly-44 and Arg-48 each coordinate ATP. Residues Asp-62 and 109–115 contribute to the UMP site; that span reads LQPGQST. Residues Thr-135 and Tyr-141 each contribute to the ATP site.

Belongs to the UMP kinase family. Homohexamer.

The protein resides in the cytoplasm. The enzyme catalyses UMP + ATP = UDP + ADP. It functions in the pathway pyrimidine metabolism; CTP biosynthesis via de novo pathway; UDP from UMP (UMPK route): step 1/1. With respect to regulation, inhibited by UTP. Its function is as follows. Catalyzes the reversible phosphorylation of UMP to UDP. This Ignicoccus hospitalis (strain KIN4/I / DSM 18386 / JCM 14125) protein is Uridylate kinase.